The primary structure comprises 194 residues: Holliday junction branch migration complex subunit RuvA (194 aa).

The domain I stretch occupies residues 1-64; it reads MIGRLRGILA…EDSVALYGFL (64 aa). A domain II region spans residues 65–140; that stretch reads REGERRLFRD…RAADFSSGAP (76 aa). A flexible linker region spans residues 140 to 144; it reads PITGQ. Residues 145–194 are domain III; sequence LGPDAVSEATVALQQLGYKPAEAARMARDAGAEGDEVATVIRKALQAALR.

It belongs to the RuvA family. As to quaternary structure, homotetramer. Forms an RuvA(8)-RuvB(12)-Holliday junction (HJ) complex. HJ DNA is sandwiched between 2 RuvA tetramers; dsDNA enters through RuvA and exits via RuvB. An RuvB hexamer assembles on each DNA strand where it exits the tetramer. Each RuvB hexamer is contacted by two RuvA subunits (via domain III) on 2 adjacent RuvB subunits; this complex drives branch migration. In the full resolvosome a probable DNA-RuvA(4)-RuvB(12)-RuvC(2) complex forms which resolves the HJ.

Its subcellular location is the cytoplasm. Functionally, the RuvA-RuvB-RuvC complex processes Holliday junction (HJ) DNA during genetic recombination and DNA repair, while the RuvA-RuvB complex plays an important role in the rescue of blocked DNA replication forks via replication fork reversal (RFR). RuvA specifically binds to HJ cruciform DNA, conferring on it an open structure. The RuvB hexamer acts as an ATP-dependent pump, pulling dsDNA into and through the RuvAB complex. HJ branch migration allows RuvC to scan DNA until it finds its consensus sequence, where it cleaves and resolves the cruciform DNA. In Xanthomonas euvesicatoria pv. vesicatoria (strain 85-10) (Xanthomonas campestris pv. vesicatoria), this protein is Holliday junction branch migration complex subunit RuvA.